The primary structure comprises 184 residues: uncharacterized protein (184 aa).

This is an uncharacterized protein from Archaeoglobus fulgidus (strain ATCC 49558 / DSM 4304 / JCM 9628 / NBRC 100126 / VC-16).